We begin with the raw amino-acid sequence, 144 residues long: HTH-type transcriptional regulator MntR (144 aa).

Positions 1–63 (MTTPSMEDYI…YEKYRGLILT (63 aa)) constitute an HTH dtxR-type domain. Residues Asp-8, Glu-11, His-77, Glu-99, Glu-102, and His-103 each contribute to the Mn(2+) site.

Belongs to the DtxR/MntR family. Homodimer.

Its subcellular location is the cytoplasm. DNA binding is strongly activated by Mn(2+). In terms of biological role, central regulator of manganese homeostasis. This chain is HTH-type transcriptional regulator MntR, found in Bacillus pumilus (strain SAFR-032).